Consider the following 387-residue polypeptide: Succinate--CoA ligase [ADP-forming] subunit beta (387 aa).

One can recognise an ATP-grasp domain in the interval 9 to 244; the sequence is KAIFADNGIP…ITEENPAERE (236 aa). Residues Lys-46, 53–55, Glu-99, Ala-102, and Glu-107 contribute to the ATP site; that span reads GRG. Mg(2+)-binding residues include Asn-199 and Asp-213. Substrate-binding positions include Asn-264 and 321 to 323; that span reads GIV.

Belongs to the succinate/malate CoA ligase beta subunit family. In terms of assembly, heterotetramer of two alpha and two beta subunits. The cofactor is Mg(2+).

It catalyses the reaction succinate + ATP + CoA = succinyl-CoA + ADP + phosphate. The catalysed reaction is GTP + succinate + CoA = succinyl-CoA + GDP + phosphate. It functions in the pathway carbohydrate metabolism; tricarboxylic acid cycle; succinate from succinyl-CoA (ligase route): step 1/1. Succinyl-CoA synthetase functions in the citric acid cycle (TCA), coupling the hydrolysis of succinyl-CoA to the synthesis of either ATP or GTP and thus represents the only step of substrate-level phosphorylation in the TCA. The beta subunit provides nucleotide specificity of the enzyme and binds the substrate succinate, while the binding sites for coenzyme A and phosphate are found in the alpha subunit. The chain is Succinate--CoA ligase [ADP-forming] subunit beta from Campylobacter jejuni subsp. jejuni serotype O:6 (strain 81116 / NCTC 11828).